Reading from the N-terminus, the 348-residue chain is Lipoyl synthase (348 aa).

[4Fe-4S] cluster is bound by residues Cys-55, Cys-60, Cys-66, Cys-81, Cys-85, Cys-88, and Ser-292. One can recognise a Radical SAM core domain in the interval 67-281 (WESREATFLI…ADAAKEMGFA (215 aa)).

Belongs to the radical SAM superfamily. Lipoyl synthase family. Requires [4Fe-4S] cluster as cofactor.

It is found in the cytoplasm. It catalyses the reaction [[Fe-S] cluster scaffold protein carrying a second [4Fe-4S](2+) cluster] + N(6)-octanoyl-L-lysyl-[protein] + 2 oxidized [2Fe-2S]-[ferredoxin] + 2 S-adenosyl-L-methionine + 4 H(+) = [[Fe-S] cluster scaffold protein] + N(6)-[(R)-dihydrolipoyl]-L-lysyl-[protein] + 4 Fe(3+) + 2 hydrogen sulfide + 2 5'-deoxyadenosine + 2 L-methionine + 2 reduced [2Fe-2S]-[ferredoxin]. It participates in protein modification; protein lipoylation via endogenous pathway; protein N(6)-(lipoyl)lysine from octanoyl-[acyl-carrier-protein]: step 2/2. In terms of biological role, catalyzes the radical-mediated insertion of two sulfur atoms into the C-6 and C-8 positions of the octanoyl moiety bound to the lipoyl domains of lipoate-dependent enzymes, thereby converting the octanoylated domains into lipoylated derivatives. The protein is Lipoyl synthase of Corynebacterium glutamicum (strain R).